Consider the following 173-residue polypeptide: Sporulation-specific protein 12 (173 aa).

Polar residues predominate over residues 1–12 (MSNKASDQSART). The tract at residues 1–56 (MSNKASDQSARTASILKTDITRENTITRSSSSNNDNYHHHNNINNYNESAKTGEDA) is disordered. N-acetylserine is present on serine 2. A phosphoserine mark is found at serine 118 and serine 125. Residues 159-173 (DSEDVEIDEDEEYFY) form a negative-charged tail region.

It is required for meiosis I chromosome division during sporulation. A component of the FEAR (CDC14 early anaphase release) network which promotes CDC14 release from the nucleolus during early anaphase. This chain is Sporulation-specific protein 12 (SPO12), found in Saccharomyces cerevisiae (strain ATCC 204508 / S288c) (Baker's yeast).